The sequence spans 346 residues: uncharacterized protein (346 aa).

Belongs to the Gfo/Idh/MocA family.

This is an uncharacterized protein from Escherichia coli (strain K12).